Consider the following 76-residue polypeptide: Small proline-rich protein 2E (76 aa).

3 tandem repeats follow at residues 21–29 (KKCPEPCPH), 30–38 (PQCPEPCPP), and 39–47 (PKCPEPCPE). The interval 21 to 47 (KKCPEPCPHPQCPEPCPPPKCPEPCPE) is 3 X 9 AA approximate tandem repeats. A disordered region spans residues 52–76 (PSYQQKCPPVQPPPPCQQKCPPKSK).

It belongs to the cornifin (SPRR) family. Expressed in uterus.

The protein localises to the cytoplasm. Cross-linked envelope protein of keratinocytes. It is a keratinocyte protein that first appears in the cell cytosol, but ultimately becomes cross-linked to membrane proteins by transglutaminase. All that results in the formation of an insoluble envelope beneath the plasma membrane. This Mus musculus (Mouse) protein is Small proline-rich protein 2E (Sprr2e).